The sequence spans 463 residues: GTPase Der (463 aa).

Residues 1 to 20 (MDEGDEDLISGRGFTEGARK) are disordered. EngA-type G domains lie at 27 to 190 (GVLA…KQAE) and 202 to 375 (RRVA…ESWD). Residues 33–40 (GRPNVGKS), 80–84 (DTGGW), 142–145 (NKID), 208–215 (GRPNVGKS), 255–259 (DTAGI), and 320–323 (NKWD) each bind GTP. Positions 376–458 (QRIPTGKLNA…PIQISVNIRE (83 aa)) constitute a KH-like domain.

The protein belongs to the TRAFAC class TrmE-Era-EngA-EngB-Septin-like GTPase superfamily. EngA (Der) GTPase family. As to quaternary structure, associates with the 50S ribosomal subunit.

Functionally, GTPase that plays an essential role in the late steps of ribosome biogenesis. This is GTPase Der from Bifidobacterium longum (strain NCC 2705).